Consider the following 218-residue polypeptide: Putative receptor like protein 25 (218 aa).

Topologically, residues Met-1–Lys-178 are extracellular. LRR repeat units lie at residues Leu-34–Leu-58, Lys-59–Leu-82, Ile-83–Leu-106, and Phe-108–Gly-131. Residue Asn-65 is glycosylated (N-linked (GlcNAc...) asparagine). Residue Asn-113 is glycosylated (N-linked (GlcNAc...) asparagine). The helical transmembrane segment at Ala-179–Ala-199 threads the bilayer. Over Ser-200 to His-218 the chain is Cytoplasmic.

This sequence belongs to the RLP family.

Its subcellular location is the cell membrane. This is Putative receptor like protein 25 from Arabidopsis thaliana (Mouse-ear cress).